Here is a 515-residue protein sequence, read N- to C-terminus: Maturase K (515 aa).

It belongs to the intron maturase 2 family. MatK subfamily.

Its subcellular location is the plastid. The protein resides in the chloroplast. Its function is as follows. Usually encoded in the trnK tRNA gene intron. Probably assists in splicing its own and other chloroplast group II introns. This is Maturase K from Trillium pusillum (Dwarf wakerobin).